We begin with the raw amino-acid sequence, 196 residues long: Glycerol-3-phosphate acyltransferase (196 aa).

Transmembrane regions (helical) follow at residues 1–21, 53–73, 78–98, 112–132, and 152–172; these read MIIL…GYLT, AITA…GSLL, GALV…FLKF, IMTS…VMLI, and LLFG…VMIF.

The protein belongs to the PlsY family. In terms of assembly, probably interacts with PlsX.

It is found in the cell membrane. It catalyses the reaction an acyl phosphate + sn-glycerol 3-phosphate = a 1-acyl-sn-glycero-3-phosphate + phosphate. The protein operates within lipid metabolism; phospholipid metabolism. Catalyzes the transfer of an acyl group from acyl-phosphate (acyl-PO(4)) to glycerol-3-phosphate (G3P) to form lysophosphatidic acid (LPA). This enzyme utilizes acyl-phosphate as fatty acyl donor, but not acyl-CoA or acyl-ACP. This is Glycerol-3-phosphate acyltransferase from Carboxydothermus hydrogenoformans (strain ATCC BAA-161 / DSM 6008 / Z-2901).